A 211-amino-acid chain; its full sequence is N-(5'-phosphoribosyl)anthranilate isomerase (211 aa).

This sequence belongs to the TrpF family.

It carries out the reaction N-(5-phospho-beta-D-ribosyl)anthranilate = 1-(2-carboxyphenylamino)-1-deoxy-D-ribulose 5-phosphate. It functions in the pathway amino-acid biosynthesis; L-tryptophan biosynthesis; L-tryptophan from chorismate: step 3/5. This chain is N-(5'-phosphoribosyl)anthranilate isomerase, found in Pseudomonas aeruginosa (strain LESB58).